Here is a 543-residue protein sequence, read N- to C-terminus: Chaperonin GroEL 2 (543 aa).

ATP contacts are provided by residues 29-32 (TLGP), 86-90 (DGTTT), glycine 413, 478-480 (NAA), and aspartate 494.

It belongs to the chaperonin (HSP60) family. As to quaternary structure, forms a cylinder of 14 subunits composed of two heptameric rings stacked back-to-back. Interacts with the co-chaperonin GroES.

It is found in the cytoplasm. The catalysed reaction is ATP + H2O + a folded polypeptide = ADP + phosphate + an unfolded polypeptide.. Together with its co-chaperonin GroES, plays an essential role in assisting protein folding. The GroEL-GroES system forms a nano-cage that allows encapsulation of the non-native substrate proteins and provides a physical environment optimized to promote and accelerate protein folding. In Thermosynechococcus vestitus (strain NIES-2133 / IAM M-273 / BP-1), this protein is Chaperonin GroEL 2.